Consider the following 640-residue polypeptide: DNA mismatch repair protein MutL (640 aa).

Disordered regions lie at residues 332–353 (PNVQ…FNFP) and 408–431 (PAHT…TFHD).

This sequence belongs to the DNA mismatch repair MutL/HexB family.

Its function is as follows. This protein is involved in the repair of mismatches in DNA. It is required for dam-dependent methyl-directed DNA mismatch repair. May act as a 'molecular matchmaker', a protein that promotes the formation of a stable complex between two or more DNA-binding proteins in an ATP-dependent manner without itself being part of a final effector complex. In Chloroherpeton thalassium (strain ATCC 35110 / GB-78), this protein is DNA mismatch repair protein MutL.